Reading from the N-terminus, the 382-residue chain is Anhydro-N-acetylmuramic acid kinase (382 aa).

An ATP-binding site is contributed by 9-16; it reads GTSLDGID.

Belongs to the anhydro-N-acetylmuramic acid kinase family.

It carries out the reaction 1,6-anhydro-N-acetyl-beta-muramate + ATP + H2O = N-acetyl-D-muramate 6-phosphate + ADP + H(+). Its pathway is amino-sugar metabolism; 1,6-anhydro-N-acetylmuramate degradation. It participates in cell wall biogenesis; peptidoglycan recycling. Its function is as follows. Catalyzes the specific phosphorylation of 1,6-anhydro-N-acetylmuramic acid (anhMurNAc) with the simultaneous cleavage of the 1,6-anhydro ring, generating MurNAc-6-P. Is required for the utilization of anhMurNAc either imported from the medium or derived from its own cell wall murein, and thus plays a role in cell wall recycling. The chain is Anhydro-N-acetylmuramic acid kinase from Bacillus anthracis (strain A0248).